Consider the following 498-residue polypeptide: Glycerol kinase (498 aa).

Thr12 contacts ADP. Residues Thr12, Thr13, and Ser14 each coordinate ATP. Thr12 is a sn-glycerol 3-phosphate binding site. Residue Arg16 participates in ADP binding. Residues Arg82, Glu83, Tyr134, and Asp244 each coordinate sn-glycerol 3-phosphate. Arg82, Glu83, Tyr134, Asp244, and Gln245 together coordinate glycerol. ADP is bound by residues Thr266 and Gly310. Residues Thr266, Gly310, Gln314, and Gly411 each contribute to the ATP site. The ADP site is built by Gly411 and Asn415.

It belongs to the FGGY kinase family.

The enzyme catalyses glycerol + ATP = sn-glycerol 3-phosphate + ADP + H(+). Its pathway is polyol metabolism; glycerol degradation via glycerol kinase pathway; sn-glycerol 3-phosphate from glycerol: step 1/1. Inhibited by fructose 1,6-bisphosphate (FBP). Key enzyme in the regulation of glycerol uptake and metabolism. Catalyzes the phosphorylation of glycerol to yield sn-glycerol 3-phosphate. This chain is Glycerol kinase, found in Chloroflexus aggregans (strain MD-66 / DSM 9485).